The chain runs to 96 residues: Putative protein p29 (96 aa).

This chain is Putative protein p29 (29), found in Acyrthosiphon pisum secondary endosymbiont phage 1 (Bacteriophage APSE-1).